The following is a 448-amino-acid chain: Eukaryotic translation initiation factor 3 subunit E (448 aa).

One can recognise a PCI domain in the interval 254–423 (TDLFFSPAYI…GTVIMNHPPQ (170 aa)).

The protein belongs to the eIF-3 subunit E family. In terms of assembly, component of the eukaryotic translation initiation factor 3 (eIF-3) complex.

It localises to the cytoplasm. In terms of biological role, component of the eukaryotic translation initiation factor 3 (eIF-3) complex, which is involved in protein synthesis of a specialized repertoire of mRNAs and, together with other initiation factors, stimulates binding of mRNA and methionyl-tRNAi to the 40S ribosome. The eIF-3 complex specifically targets and initiates translation of a subset of mRNAs involved in cell proliferation. The protein is Eukaryotic translation initiation factor 3 subunit E (int6) of Emericella nidulans (strain FGSC A4 / ATCC 38163 / CBS 112.46 / NRRL 194 / M139) (Aspergillus nidulans).